A 395-amino-acid chain; its full sequence is MTGGGPSSNNSSQPEEVCLVCSDISTGYHYGVPSCNGCKTFFRRTIMKNQTFSCQFQGKCPVDKSIRCACRHCRFEKCLQVGMDRNAIQQNRDPIGYTKRTRRYPPIKKVEASDECSPAMVSENDRSEDNFLTLLSSTEQKCCALRLAEYMPSRTLIEAVVSDCLLTDEVFMAEHAILSPRHRVTSLRFANQSDYHYWHERDWFVMIEWAKTLPVFQSLPFTDKLALLRHSAITYPSLVHVFNSPDHGLDTIVFPDGAYFDRTPEPTRPLGFNKKKYQMLDQLLKPMRSMEIDMTEFAAFKAIFFLNPDADDVDSNAKKTLSDGRSAITNALYRYMVKKKGAEDAGDRFGRLLLLGTVLATMAVEMKEAVLVADFFDQIQFSTFAKQLLFGIKTE.

Residues 15–90 constitute a DNA-binding region (nuclear receptor); sequence EEVCLVCSDI…VGMDRNAIQQ (76 aa). 2 NR C4-type zinc fingers span residues 18 to 38 and 54 to 78; these read CLVC…CNGC and CQFQ…FEKC. Residues 152–392 enclose the NR LBD domain; the sequence is PSRTLIEAVV…TFAKQLLFGI (241 aa).

Belongs to the nuclear hormone receptor family.

The protein resides in the nucleus. Its function is as follows. Probable transcription factor that acts in a feed-forward loop with nhr-68 to activate genes involved in the vitamin B12-independent breakdown of the short-chain fatty acid propionate. This pathway is triggered in response to a diet low in vitamin B12, when canonical vitamin B12-dependent propionate breakdown cannot function; the resulting accumulation of propionate is probably sensed by nhr-10 and/or nhr-68. This is Nuclear hormone receptor family member nhr-10 (nhr-10) from Caenorhabditis elegans.